The sequence spans 45 residues: Cytochrome b559 subunit beta (45 aa).

Residues 20–36 (WLAVHTLAVPTVFFLGA) form a helical membrane-spanning segment. Histidine 24 serves as a coordination point for heme.

The protein belongs to the PsbE/PsbF family. In terms of assembly, heterodimer of an alpha subunit and a beta subunit. PSII is composed of 1 copy each of membrane proteins PsbA, PsbB, PsbC, PsbD, PsbE, PsbF, PsbH, PsbI, PsbJ, PsbK, PsbL, PsbM, PsbT, PsbX, PsbY, PsbZ, Psb30/Ycf12, peripheral proteins PsbO, CyanoQ (PsbQ), PsbU, PsbV and a large number of cofactors. It forms dimeric complexes. The cofactor is heme b.

Its subcellular location is the cellular thylakoid membrane. This b-type cytochrome is tightly associated with the reaction center of photosystem II (PSII). PSII is a light-driven water:plastoquinone oxidoreductase that uses light energy to abstract electrons from H(2)O, generating O(2) and a proton gradient subsequently used for ATP formation. It consists of a core antenna complex that captures photons, and an electron transfer chain that converts photonic excitation into a charge separation. The chain is Cytochrome b559 subunit beta from Trichormus variabilis (strain ATCC 29413 / PCC 7937) (Anabaena variabilis).